The primary structure comprises 357 residues: 3'-hydroxy-N-methyl-(S)-coclaurine 4'-O-methyltransferase 2 (357 aa).

Asp226 contributes to the S-adenosyl-L-methionine binding site. His264 (proton acceptor) is an active-site residue.

This sequence belongs to the class I-like SAM-binding methyltransferase superfamily. Cation-independent O-methyltransferase family. COMT subfamily. In terms of assembly, homodimer. As to expression, expressed in roots, stems, leaves and flowers.

The enzyme catalyses (S)-3'-hydroxy-N-methylcoclaurine + S-adenosyl-L-methionine = (S)-reticuline + S-adenosyl-L-homocysteine + H(+). It functions in the pathway alkaloid biosynthesis; (S)-reticuline biosynthesis; (S)-reticuline from (S)-norcoclaurine: step 4/4. Involved in the biosynthesis of benzylisoquinoline alkaloids. Catalyzes the transfer of the methyl group to the 4'-hydroxyl group of 3'-hydroxy-N-methylcoclaurine to form reticuline. Can also use laudanosoline and, with a lower activity, 6-O-methylnorlaudanosoline and norlaudanosoline as substrates. Also involved in the papaverine biosynthesis. The sequence is that of 3'-hydroxy-N-methyl-(S)-coclaurine 4'-O-methyltransferase 2 from Papaver somniferum (Opium poppy).